The primary structure comprises 266 residues: 26 kDa endochitinase 2 (266 aa).

The N-terminal stretch at 1–23 (MRSLAVVVAVVATVAMAIGTARG) is a signal peptide. 3 cysteine pairs are disulfide-bonded: Cys46–Cys108, Cys120–Cys128, and Cys227–Cys259. Glu90 serves as the catalytic Proton donor.

The protein belongs to the glycosyl hydrolase 19 family. Chitinase class II subfamily.

It carries out the reaction Random endo-hydrolysis of N-acetyl-beta-D-glucosaminide (1-&gt;4)-beta-linkages in chitin and chitodextrins.. Its function is as follows. Defense against chitin-containing fungal pathogens. The sequence is that of 26 kDa endochitinase 2 from Hordeum vulgare (Barley).